Consider the following 435-residue polypeptide: Glutamyl-tRNA reductase (435 aa).

Substrate contacts are provided by residues 49 to 52 (TCNR), Ser-109, 114 to 116 (ETQ), and Gln-120. Residue Cys-50 is the Nucleophile of the active site. Residue 189 to 194 (GAGEMS) coordinates NADP(+).

This sequence belongs to the glutamyl-tRNA reductase family. As to quaternary structure, homodimer.

It carries out the reaction (S)-4-amino-5-oxopentanoate + tRNA(Glu) + NADP(+) = L-glutamyl-tRNA(Glu) + NADPH + H(+). It functions in the pathway porphyrin-containing compound metabolism; protoporphyrin-IX biosynthesis; 5-aminolevulinate from L-glutamyl-tRNA(Glu): step 1/2. Its function is as follows. Catalyzes the NADPH-dependent reduction of glutamyl-tRNA(Glu) to glutamate 1-semialdehyde (GSA). This is Glutamyl-tRNA reductase from Listeria monocytogenes serotype 4a (strain HCC23).